The chain runs to 358 residues: Nuclear receptor subfamily 1 group I member 3 (358 aa).

The segment at residues 18 to 93 (PRNCVVCGDR…VGMRKDMILS (76 aa)) is a DNA-binding region (nuclear receptor). The NR C4-type zinc-finger motif lies at 21–41 (CVVCGDRATGYHFHALTCEGC). A Phosphothreonine; by PKC modification is found at Thr48. An NR C4-type zinc finger spans residues 57–81 (CPFAGRCEVSKAQRRHCPACRLQKC). One can recognise an NR LBD domain in the interval 119–358 (QQKELVQILL…MTPLLGEICS (240 aa)).

The protein belongs to the nuclear hormone receptor family. NR1 subfamily. As to quaternary structure, heterodimer of NR1I3 and RXR. Interacts with PSMC4. Interacts with ECT2. Directly interacts with DNAJC7; this complex may also include HSP90. Interacts with CRY1. Interacts with CRY2 in a ligand-dependent manner. Post-translationally, phosphorylated at Thr-48 by PKC, dephosphorylation of Thr-48 is required for nuclear translocation and activation. Predominantly expressed in liver.

Its subcellular location is the nucleus. It localises to the cytoplasm. It is found in the cytoskeleton. Its function is as follows. Binds and transactivates the retinoic acid response elements that control expression of the retinoic acid receptor beta 2 and alcohol dehydrogenase 3 genes. Transactivates both the phenobarbital responsive element module of the human CYP2B6 gene and the CYP3A4 xenobiotic response element. This chain is Nuclear receptor subfamily 1 group I member 3 (Nr1i3), found in Mus musculus (Mouse).